The chain runs to 260 residues: Kallikrein-8 (260 aa).

The signal sequence occupies residues 1 to 28 (MGRPPPCAIQPWILLLLFMGAWAGLTRA). A propeptide spanning residues 29–32 (QGSK) is cleaved from the precursor. Positions 33-257 (ILEGRECIPH…YTTWIKKTMD (225 aa)) constitute a Peptidase S1 domain. Cystine bridges form between Cys-39/Cys-173, Cys-58/Cys-74, Cys-145/Cys-246, Cys-152/Cys-218, Cys-184/Cys-198, and Cys-208/Cys-233. His-73 functions as the Charge relay system in the catalytic mechanism. N-linked (GlcNAc...) asparagine glycosylation occurs at Asn-110. The Charge relay system role is filled by Asp-120. Catalysis depends on Ser-212, which acts as the Charge relay system.

Belongs to the peptidase S1 family. Kallikrein subfamily. In terms of assembly, interacts with SPINK9. Expressed in the limbic system of mouse brain and is localized at highest concentration in pyramidal neurons of the hippocampal CA1-3 subfields. Also detected in spinal cord gray matter and in keratinized stratified epithelia of epidermis, hair, tongue, palate, nasal cavity, pharynges, esophagus and forestomach. In skin and mucus membranes, expressed in stratum spinosum and stratum granulosum. Expressed during estrus in vaginal epithelial cells but not stromal cells. Within the vaginal epithelium, expressed in prickle cells, granular cells and parakeratotic cells but not in basal cells. Not expressed in uterus. Expressed in the keratinocytes.

Its subcellular location is the secreted. It is found in the cytoplasm. It catalyses the reaction Cleavage of amide substrates following the basic amino acids Arg or Lys at the P1 position, with a preference for Arg over Lys.. Strongly inhibited by diisopropyl fluorophosphate, leupeptin and (4-amidinophenyl)methanesulfonyl 1-fluoride. Functionally, serine protease which is capable of degrading a number of proteins such as casein, fibrinogen, kininogen, fibronectin and collagen type IV. Also cleaves L1CAM in response to increased neural activity. Induces neurite outgrowth and fasciculation of cultured hippocampal neurons. Plays a role in the formation and maturation of orphan and small synaptic boutons in the Schaffer-collateral pathway, regulates Schaffer-collateral long-term potentiation in the hippocampus and is required for memory acquisition and synaptic plasticity. Involved in skin desquamation and keratinocyte proliferation. Plays a role in the secondary phase of pathogenesis following spinal cord injury. This Mus musculus (Mouse) protein is Kallikrein-8 (Klk8).